Consider the following 518-residue polypeptide: Arrestin-related trafficking adapter 10 (518 aa).

Lys118 participates in a covalent cross-link: Glycyl lysine isopeptide (Lys-Gly) (interchain with G-Cter in ubiquitin).

Belongs to the ART10 family. As to quaternary structure, interacts with RSP5. Ubiquitinated by RSP5.

Its subcellular location is the cytoplasm. May regulate endocytosis by recruiting RSP5 ubiquitin ligase activity to specific plasma membrane proteins in response to extracellular stimuli. The chain is Arrestin-related trafficking adapter 10 (ART10) from Saccharomyces cerevisiae (strain Lalvin EC1118 / Prise de mousse) (Baker's yeast).